The chain runs to 413 residues: Heparan-sulfate 6-O-sulfotransferase 1-A (413 aa).

The Cytoplasmic segment spans residues 9-15 (MVERSSK). A helical; Signal-anchor for type II membrane protein membrane pass occupies residues 16–36 (FLFIVVGSVLFMLILYQYVAP). Residues 37–413 (GMMNFGSPHG…DYMNHIINRW (377 aa)) lie on the Lumenal side of the membrane. Residue 92–100 (HIQKTGGTT) participates in 3'-phosphoadenylyl sulfate binding. Residues 122–123 (KK), arginine 139, tryptophan 144, and histidine 149 contribute to the substrate site. Residue histidine 149 is the Proton acceptor of the active site. Arginine 183 and serine 191 together coordinate 3'-phosphoadenylyl sulfate. 2 residues coordinate substrate: histidine 195 and tryptophan 202. The N-linked (GlcNAc...) asparagine glycan is linked to asparagine 262. 315–317 (MQY) contributes to the 3'-phosphoadenylyl sulfate binding site. Asparagine 318 is a glycosylation site (N-linked (GlcNAc...) asparagine). 321–322 (RA) lines the 3'-phosphoadenylyl sulfate pocket. Asparagine 329 is a glycosylation site (N-linked (GlcNAc...) asparagine). Residues 374 to 401 (PLFPFRRTSSSDSTFRDDAPESEGSRLP) form a disordered region.

This sequence belongs to the sulfotransferase 6 family. As to expression, during somitogenesis, first expressed in polster and presumptive forebrain. During mid-somitogenesis, expressed in eye, hindbrain and anterior spinal cord. During late somitogenesis, strong expression in eye and hindbrain, decreased levels in midbrain and anterior spinal cord. At 24 hours post-fertilization (hpf), expressed in neural retina and lens, brain and anterior spinal cord. At 36 hpf, retinal expression is confined to the ciliary marginal zone and there is strong expression in tectum, rhombomeres and otic vesicle. At 48 hpf, expressed in retinal ganglion cells and in tectum, rhombomeres and pectoral fin. Not detected in the vasculature during embryogenesis.

It localises to the membrane. It carries out the reaction alpha-D-glucosaminyl-[heparan sulfate](n) + 3'-phosphoadenylyl sulfate = 6-sulfo-alpha-D-glucosaminyl-[heparan sulfate](n) + adenosine 3',5'-bisphosphate + H(+). 6-O-sulfation enzyme which catalyzes the transfer of sulfate from 3'-phosphoadenosine 5'-phosphosulfate (PAPS) to position 6 of the N-sulfoglucosamine residue (GlcNS) of heparan sulfate. The chain is Heparan-sulfate 6-O-sulfotransferase 1-A from Danio rerio (Zebrafish).